We begin with the raw amino-acid sequence, 347 residues long: Eukaryotic translation initiation factor 3 subunit I (347 aa).

5 WD repeats span residues 8-49 (GHER…GTLD), 51-89 (HMGS…CVQT), 149-190 (THEG…KLVE), 194-233 (VHKD…VLKT), and 291-330 (GHFG…FDFK).

It belongs to the eIF-3 subunit I family. As to quaternary structure, component of the eukaryotic translation initiation factor 3 (eIF-3) complex.

It is found in the cytoplasm. In terms of biological role, component of the eukaryotic translation initiation factor 3 (eIF-3) complex, which is involved in protein synthesis of a specialized repertoire of mRNAs and, together with other initiation factors, stimulates binding of mRNA and methionyl-tRNAi to the 40S ribosome. The eIF-3 complex specifically targets and initiates translation of a subset of mRNAs involved in cell proliferation. This chain is Eukaryotic translation initiation factor 3 subunit I, found in Candida glabrata (strain ATCC 2001 / BCRC 20586 / JCM 3761 / NBRC 0622 / NRRL Y-65 / CBS 138) (Yeast).